The following is a 203-amino-acid chain: ATP-dependent Clp protease proteolytic subunit (203 aa).

Ser107 (nucleophile) is an active-site residue. The active site involves His132.

This sequence belongs to the peptidase S14 family. In terms of assembly, fourteen ClpP subunits assemble into 2 heptameric rings which stack back to back to give a disk-like structure with a central cavity, resembling the structure of eukaryotic proteasomes.

It is found in the cytoplasm. It carries out the reaction Hydrolysis of proteins to small peptides in the presence of ATP and magnesium. alpha-casein is the usual test substrate. In the absence of ATP, only oligopeptides shorter than five residues are hydrolyzed (such as succinyl-Leu-Tyr-|-NHMec, and Leu-Tyr-Leu-|-Tyr-Trp, in which cleavage of the -Tyr-|-Leu- and -Tyr-|-Trp bonds also occurs).. In terms of biological role, cleaves peptides in various proteins in a process that requires ATP hydrolysis. Has a chymotrypsin-like activity. Plays a major role in the degradation of misfolded proteins. The chain is ATP-dependent Clp protease proteolytic subunit from Shewanella woodyi (strain ATCC 51908 / MS32).